A 306-amino-acid chain; its full sequence is Curved DNA-binding protein (306 aa).

Residues 5-69 (DYYAIMGVKP…QRRAEYDQMW (65 aa)) form the J domain.

It localises to the cytoplasm. The protein resides in the nucleoid. Its function is as follows. DNA-binding protein that preferentially recognizes a curved DNA sequence. It is probably a functional analog of DnaJ; displays overlapping activities with DnaJ, but functions under different conditions, probably acting as a molecular chaperone in an adaptive response to environmental stresses other than heat shock. Lacks autonomous chaperone activity; binds native substrates and targets them for recognition by DnaK. Its activity is inhibited by the binding of CbpM. In Escherichia coli (strain SMS-3-5 / SECEC), this protein is Curved DNA-binding protein.